We begin with the raw amino-acid sequence, 60 residues long: Cecropin-B (60 aa).

The N-terminal stretch at methionine 1–glycine 25 is a signal peptide. At leucine 59 the chain carries Leucine amide.

The protein belongs to the cecropin family.

It is found in the secreted. Functionally, cecropins have lytic and antibacterial activity against several Gram-positive and Gram-negative bacteria. The protein is Cecropin-B (CecB) of Anopheles gambiae (African malaria mosquito).